Here is a 103-residue protein sequence, read N- to C-terminus: Large ribosomal subunit protein uL24 (103 aa).

This sequence belongs to the universal ribosomal protein uL24 family. In terms of assembly, part of the 50S ribosomal subunit.

Its function is as follows. One of two assembly initiator proteins, it binds directly to the 5'-end of the 23S rRNA, where it nucleates assembly of the 50S subunit. Functionally, one of the proteins that surrounds the polypeptide exit tunnel on the outside of the subunit. The chain is Large ribosomal subunit protein uL24 from Brucella abortus (strain S19).